An 800-amino-acid chain; its full sequence is Protocadherin beta-10 (800 aa).

Residues 1 to 26 (MAVRELCFPRQRQVLFLFLFWGVSLA) form the signal peptide. Over 27–692 (GSGFGRYSVT…AEADLLTVYL (666 aa)) the chain is Extracellular. 5 consecutive Cadherin domains span residues 35-133 (VTEE…APVF), 138-242 (TVLK…APQF), 247-347 (YETQ…PPEL), 352-451 (FSNS…APAF), and 456-561 (YTLF…SPFV). N-linked (GlcNAc...) asparagine glycosylation is found at Asn-169 and Asn-181. Asn-418 and Asn-436 each carry an N-linked (GlcNAc...) asparagine glycan. N-linked (GlcNAc...) asparagine glycosylation is present at Asn-567. Positions 568 to 671 (GSAPCTELVP…LVDGFSQPYL (104 aa)) constitute a Cadherin 6 domain. The chain crosses the membrane as a helical span at residues 693–713 (VVALASVSSLFLLSVLLFVAV). Topologically, residues 714–800 (RLCRRSRAAS…FRNSFGFNIQ (87 aa)) are cytoplasmic.

Its subcellular location is the cell membrane. In terms of biological role, potential calcium-dependent cell-adhesion protein. May be involved in the establishment and maintenance of specific neuronal connections in the brain. The protein is Protocadherin beta-10 (PCDHB10) of Homo sapiens (Human).